Reading from the N-terminus, the 669-residue chain is L-type lectin-domain containing receptor kinase IV.4 (669 aa).

The N-terminal stretch at 1-23 (MFFIKLFTIFFLSFFWQSLKSSS) is a signal peptide. At 24-294 (QIIDFTYNGF…TRVYRFYKNW (271 aa)) the chain is on the extracellular side. Residues 26–260 (IDFTYNGFRP…SEIFVLGWSF (235 aa)) are legume-lectin like. Residues asparagine 58, asparagine 80, asparagine 127, asparagine 152, and asparagine 185 are each glycosylated (N-linked (GlcNAc...) asparagine). The helical transmembrane segment at 295 to 315 (VPLISLLLIPFLLIIFLVRFI) threads the bilayer. Residues 316–669 (MKRRRKFAEE…VAYSLLSSGR (354 aa)) lie on the Cytoplasmic side of the membrane. The 278-residue stretch at 350–627 (FKDKNILGSG…LQYLRGDAML (278 aa)) folds into the Protein kinase domain. ATP is bound by residues 356–364 (LGSGGFGSV) and lysine 379. Aspartate 475 acts as the Proton acceptor in catalysis.

The protein in the C-terminal section; belongs to the protein kinase superfamily. Ser/Thr protein kinase family. In the N-terminal section; belongs to the leguminous lectin family.

It is found in the cell membrane. It carries out the reaction L-seryl-[protein] + ATP = O-phospho-L-seryl-[protein] + ADP + H(+). The enzyme catalyses L-threonyl-[protein] + ATP = O-phospho-L-threonyl-[protein] + ADP + H(+). In terms of biological role, involved in resistance response to the pathogenic oomycetes Phytophthora infestans and Phytophthora capsici and to the pathogenic bacteria Pseudomonas syringae. The sequence is that of L-type lectin-domain containing receptor kinase IV.4 from Arabidopsis thaliana (Mouse-ear cress).